A 1756-amino-acid polypeptide reads, in one-letter code: MESQQLSNYPHISHGSACASVTSKEVHTNQDPLDVSASKIQEYDKASTKANSQQTTTPASSAVPENPHHASPQPASVPPPQNGPYPQQCMMTQNQANPSGWSFYGHPSMIPYTPYQMSPMYFPPGPQSQFPQYPSSVGTPLSTPSPESGNTFTDSSSADSDMTSTKKYVRPPPMLTSPNDFPNWVKTYIKFLQNSNLGGIIPTVNGKPVRPITDDELTFLYNTFQIFAPSQFLPTWVKDILSVDYTDIMKILSKSIEKMQSDTQEANDIVTLANLQYNGSTPADAFETKVTNIIDRLNNNGIHINNKVACQLIMRGLSGEYKFLRYTRHRHLNMTVAELFLDIHAIYEEQQGSRNSKPNYRRNPSDEKNDSRSYTNTTKPKVIARNPQKTNNSKSKTARAHNVSTSNNSPSTDNDSISKSTTEPIQLNNKHDLHLGQKLTESTVNHTNHSDDELPGHLLLDSGASRTLIRSAHHIHSASSNPDINVVDAQKRNIPINAIGDLQFHFQDNTKTSIKVLHTPNIAYDLLSLNELAAVDITACFTKNVLERSDGTVLAPIVKYGDFYWVSKKYLLPSNISVPTINNVHTSESTRKYPYPFIHRMLAHANAQTIRYSLKNNTITYFNESDVDWSSAIDYQCPDCLIGKSTKHRHIKGSRLKYQNSYEPFQYLHTDIFGPVHNLPKSAPSYFISFTDETTKFRWVYPLHDRREDSILDVFTTILAFIKNQFQASVLVIQMDRGSEYTNRTLHKFLEKKNGITPCYTTTADSRAHGVAERLNRTLLDDCRTQLQCSGLPNHLWFSAIEFSTIVRNSLASPKSKKSARQHAGLAGLDISTLLPFGQPVIVNDHNPNSKIHPRGIPGYALHPSRNSYGYIIYLPSLKKTVDTTNYVILQGKESRLDQFNYDALTFDEDLNRLTASYHSFIASNEIQESNDLNIESDHDFQSDIELHPEQPRNVLSKAVSPTDSTPPSTHTEDSKRVSKTNIRAPREVDPNISESNILPSKKRSSTPQISNIESTGSGGMHKLNVPLLAPMSQSNTHESSHASKSKDFRHSDSYSENETNHTNVPISSTGGTNNKTVPQISDQETEKRIIHRSPSIDASPPENNSSHNIVPIKTPTTVSEQNTEESIIADLPLPDLPPESPTEFPDPFKELPPINSHQTNSSLGGIGDSNAYTTINSKKRSLEDNETEIKVSRDTWNTKNMRSLEPPRSKKRIHLIAAVKAVKSIKPIRTTLRYDEAITYNKDIKEKEKYIEAYHKEVNQLLKMNTWDTDKYYDRKEIDPKRVINSMFIFNRKRDGTHKARFVARGDIQHPDTYDSGMQSNTVHHYALMTSLSLALDNNYYITQLDISSAYLYADIKEELYIRPPPHLGMNDKLIRLKKSLYGLKQSGANWYETIKSYLIKQCGMEEVRGWSCVFKNSQVTICLFVDDMILFSKDLNANKKIITTLKKQYDTKIINLGESDNEIQYDILGLEIKYQRGKYMKLGMENSLTEKIPKLNVPLNPKGRKLSAPGQPGLYIDQDELEIDEDEYKEKVHEMQKLIGLASYVGYKFRFDLLYYINTLAQHILFPSRQVLDMTYELIQFMWDTRDKQLIWHKNKPTEPDNKLVAISDASYGNQPYYKSQIGNIYLLNGKVIGGKSTKASLTCTSTTEAEIHAISESVPLLNNLSHLVQELNKKPITKGLLTDSKSTISIIISNNEEKFRNRFFGTKAMRLRDEVSGNHLHVCYIETKKNIADVMTKPLPIKTFKLLTNKWIH.

Polar residues-rich tracts occupy residues 1–10 (MESQQLSNYP), 48–60 (TKAN…TPAS), and 127–152 (QSQF…GNTF). Disordered regions lie at residues 1-93 (MESQ…MMTQ), 126-173 (PQSQ…RPPP), and 352-421 (GSRN…SKST). The segment covering 153-165 (TDSSSADSDMTST) has biased composition (low complexity). The tract at residues 299–401 (NNGIHINNKV…NSKSKTARAH (103 aa)) is RNA-binding. A compositionally biased stretch (low complexity) spans 402 to 418 (NVSTSNNSPSTDNDSIS). Asp-461 serves as the catalytic For protease activity; shared with dimeric partner. Positions 583–640 (NVHTSESTRKYPYPFIHRMLAHANAQTIRYSLKNNTITYFNESDVDWSSAIDYQCPDC) are integrase-type zinc finger-like. Positions 660 to 836 (NSYEPFQYLH…AGLDISTLLP (177 aa)) constitute an Integrase catalytic domain. Positions 671 and 736 each coordinate Mg(2+). Disordered stretches follow at residues 957 to 1088 (SKAV…ETEK), 1093 to 1112 (RSPS…NIVP), and 1131 to 1188 (DLPL…DNET). Low complexity predominate over residues 961–970 (SPTDSTPPST). Polar residues predominate over residues 1006–1016 (STPQISNIEST). Basic and acidic residues predominate over residues 1039 to 1054 (ESSHASKSKDFRHSDS). Composition is skewed to polar residues over residues 1055–1083 (YSEN…QISD) and 1102–1112 (PENNSSHNIVP). The short motif at 1179 to 1213 (KKRSLEDNETEIKVSRDTWNTKNMRSLEPPRSKKR) is the Bipartite nuclear localization signal element. In terms of domain architecture, Reverse transcriptase Ty1/copia-type spans 1339–1477 (NNYYITQLDI…DILGLEIKYQ (139 aa)). Mg(2+)-binding residues include Asp-1347, Asp-1428, Asp-1429, Asp-1611, Glu-1653, and Asp-1686. One can recognise an RNase H Ty1/copia-type domain in the interval 1611–1753 (DASYGNQPYY…IKTFKLLTNK (143 aa)).

As to quaternary structure, the capsid protein forms a homotrimer, from which the VLPs are assembled. The protease is a homodimer, whose active site consists of two apposed aspartic acid residues. In terms of processing, initially, virus-like particles (VLPs) are composed of the structural unprocessed proteins Gag and Gag-Pol, and also contain the host initiator methionine tRNA (tRNA(i)-Met) which serves as a primer for minus-strand DNA synthesis, and a dimer of genomic Ty RNA. Processing of the polyproteins occurs within the particle and proceeds by an ordered pathway, called maturation. First, the protease (PR) is released by autocatalytic cleavage of the Gag-Pol polyprotein yielding capsid protein p45 and a Pol-p154 precursor protein. This cleavage is a prerequisite for subsequent processing of Pol-p154 at the remaining sites to release the mature structural and catalytic proteins. Maturation takes place prior to the RT reaction and is required to produce transposition-competent VLPs.

The protein localises to the cytoplasm. Its subcellular location is the nucleus. It carries out the reaction DNA(n) + a 2'-deoxyribonucleoside 5'-triphosphate = DNA(n+1) + diphosphate. The enzyme catalyses Endonucleolytic cleavage to 5'-phosphomonoester.. Functionally, capsid protein (CA) is the structural component of the virus-like particle (VLP), forming the shell that encapsulates the retrotransposons dimeric RNA genome. The particles are assembled from trimer-clustered units and there are holes in the capsid shells that allow for the diffusion of macromolecules. CA also has nucleocapsid-like chaperone activity, promoting primer tRNA(i)-Met annealing to the multipartite primer-binding site (PBS), dimerization of Ty1 RNA and initiation of reverse transcription. The aspartyl protease (PR) mediates the proteolytic cleavages of the Gag and Gag-Pol polyproteins after assembly of the VLP. In terms of biological role, reverse transcriptase/ribonuclease H (RT) is a multifunctional enzyme that catalyzes the conversion of the retro-elements RNA genome into dsDNA within the VLP. The enzyme displays a DNA polymerase activity that can copy either DNA or RNA templates, and a ribonuclease H (RNase H) activity that cleaves the RNA strand of RNA-DNA heteroduplexes during plus-strand synthesis and hydrolyzes RNA primers. The conversion leads to a linear dsDNA copy of the retrotransposon that includes long terminal repeats (LTRs) at both ends. Its function is as follows. Integrase (IN) targets the VLP to the nucleus, where a subparticle preintegration complex (PIC) containing at least integrase and the newly synthesized dsDNA copy of the retrotransposon must transit the nuclear membrane. Once in the nucleus, integrase performs the integration of the dsDNA into the host genome. The polypeptide is Transposon Ty1-PR2 Gag-Pol polyprotein (TY1B-PR2) (Saccharomyces cerevisiae (strain ATCC 204508 / S288c) (Baker's yeast)).